Reading from the N-terminus, the 188-residue chain is Calcium load-activated calcium channel (188 aa).

At 1-4 (MSTM) the chain is on the lumenal side. The helical transmembrane segment at 5–32 (FADTILIVFISICTALLAEGITWVLVYR) threads the bilayer. The stretch at 32-89 (RTDKYKRLKAEVEKQSKKLEKKKETITESAGRQQKKKIERQEEKLKNNNRDLSMVRMK) forms a coiled coil. Over 33–86 (TDKYKRLKAEVEKQSKKLEKKKETITESAGRQQKKKIERQEEKLKNNNRDLSMV) the chain is Cytoplasmic. A helical membrane pass occupies residues 87-106 (RMKSMFAIGFCFTALMGMFN). Residues 107-120 (SIFDGRVVAKLPFV) are Lumenal-facing. Residues 121–130 (PLSYIQGLSH) lie within the membrane without spanning it. Residues 131-140 (RNLLGEDYTD) lie on the Lumenal side of the membrane. A helical transmembrane segment spans residues 141–162 (CSFIFLYILCTMSIRQNIQKML). Residues 163–188 (GLAPSRAATKQAGGFLGPPPQAAKFS) are Cytoplasmic-facing.

The protein belongs to the TMCO1 family. Homodimer and homotetramer. Component of the multi-pass translocon (MPT) complex.

Its subcellular location is the endoplasmic reticulum membrane. The protein localises to the golgi apparatus membrane. Functionally, calcium-selective channel required to prevent calcium stores from overfilling, thereby playing a key role in calcium homeostasis. In response to endoplasmic reticulum (ER) overloading, assembles into a homotetramer, forming a functional calcium-selective channel, regulating the calcium content in endoplasmic reticulum store. Component of the multi-pass translocon (MPT) complex that mediates insertion of multi-pass membrane proteins into the lipid bilayer of membranes. The polypeptide is Calcium load-activated calcium channel (Danio rerio (Zebrafish)).